We begin with the raw amino-acid sequence, 494 residues long: UPF0371 protein M28_Spy1076 (494 aa).

This sequence belongs to the UPF0371 family.

The sequence is that of UPF0371 protein M28_Spy1076 from Streptococcus pyogenes serotype M28 (strain MGAS6180).